The chain runs to 265 residues: R-spondin-1 (265 aa).

The N-terminal stretch at 1-20 is a signal peptide; it reads MRLGLCVVALVLSWTHIAVG. FU repeat units follow at residues 34–85 and 91–135; these read AEGS…GYFD and MNKC…GSTA. 11 disulfide bridges follow: C40–C47, C44–C53, C56–C75, C79–C94, C97–C105, C102–C111, C114–C125, C129–C142, C148–C190, C159–C166, and C199–C206. N137 is a glycosylation site (N-linked (GlcNAc...) asparagine). One can recognise a TSP type-1 domain in the interval 147-207; that stretch reads QCEMSEWSPW…KCTVRRTPCP (61 aa). A C-linked (Man) tryptophan glycan is attached at W153. C-linked (Man) tryptophan; by DPY19L3 glycosylation occurs at W156. 2 disordered regions span residues 173–192 and 201–265; these read EERT…TCSD and VRRT…TWAQ. A compositionally biased stretch (low complexity) spans 245–257; sequence QQQPQPGTTGPLT.

It belongs to the R-spondin family. In terms of assembly, interacts with ZNRF3; promoting indirect interaction between ZNRF3 and LGR4 and membrane clearance of ZNRF3. Identified in a complex composed of RNF43, LGR5 and RSPO1. Interacts with the extracellular domain of FZD8 and LRP6. It however does not form a ternary complex with FZD8 and LRP6. Interacts with WNT1. Binds heparin. Interacts with LGR4, LGR5 and LGR6. Interacts (via FU repeats) with KREM1. C-, and N-glycosylated. N-glycosylation at Asn-137, negatively influences its secretion and enhancing effect on Wnt/beta-catenin signaling. C-mannosylation at Trp-156 by DPY19L3 is required for its secretion an regulates the enhancing activity of Wnt signaling. As to expression, expressed in the dorsal part of the neural tube on 10 and 12 dpc, especially in the boundary region between roof plate and neuroepithelium. This expression is enhanced in the rostral part. Also expressed in other tissues such as truncal region neighboring forelimbs and mesenchymal tissues around the nasal cavity.

It localises to the secreted. Its subcellular location is the nucleus. Activator of the canonical Wnt signaling pathway by acting as a ligand for LGR4-6 receptors. Upon binding to LGR4-6 (LGR4, LGR5 or LGR6), LGR4-6 associate with phosphorylated LRP6 and frizzled receptors that are activated by extracellular Wnt receptors, triggering the canonical Wnt signaling pathway to increase expression of target genes. Also regulates the canonical Wnt/beta-catenin-dependent pathway and non-canonical Wnt signaling by acting as an inhibitor of ZNRF3, an important regulator of the Wnt signaling pathway. Acts as a ligand for frizzled FZD8 and LRP6. May negatively regulate the TGF-beta pathway. Has a essential roles in ovary determination. Regulates Wnt signaling by antagonizing DKK1/KREM1-mediated internalization of LRP6 through an interaction with KREM1. This chain is R-spondin-1 (Rspo1), found in Mus musculus (Mouse).